A 331-amino-acid chain; its full sequence is Phosphate acyltransferase (331 aa).

Belongs to the PlsX family. Homodimer. Probably interacts with PlsY.

Its subcellular location is the cytoplasm. It carries out the reaction a fatty acyl-[ACP] + phosphate = an acyl phosphate + holo-[ACP]. It participates in lipid metabolism; phospholipid metabolism. Its function is as follows. Catalyzes the reversible formation of acyl-phosphate (acyl-PO(4)) from acyl-[acyl-carrier-protein] (acyl-ACP). This enzyme utilizes acyl-ACP as fatty acyl donor, but not acyl-CoA. The polypeptide is Phosphate acyltransferase (Lactococcus lactis subsp. cremoris (strain SK11)).